The primary structure comprises 697 residues: MAITAYDALTERQKAPKVLLINDFAISSSSSSPPFFNLAATFRDNIRSFLREYAEIEDYTIDGATVSTIFLGSQANGVVFPLYIIEQQISDSSPNPLCDFCRCFGWGHHYVTKRKYHMIIPNRDEWNEPLKRESLTLSSHLMHGLIHCNGFGHLLCINTDLDDPNHLSGDQIMDFWDRLCSTLHTRKISLDDTSKKGAMDLRLLHGVAYGRPWFGKWDYMFSHGSFGVKKDLYWRAILTLSSIEVDKILEELSGTSKGRVMKKIIDFYRGSTESPLATLSDLLRFMLGFISKAPIERKTAMALVAMSLDHVSYPTLRADENSEVCTSPDQESDDNGYESGRDTVLDDHNTTTSGIKPPQYYSFDDLSRREHSRWPGRRLNDAAQAVLKVFKERNSTISRQDLREAVRSSIGDTGLIDFLLKHIDKVLIGDQIVQRSTNPKSRMLQFSLRTINSRVQEQKRKKKRKVKPQETSECTSTTPGLSPYDDILYLYQNLLLTYPDSDLYSEASQVILKCKSFVKEWSYQEQNHLTVSCQVLPNHEELLRDFTRLLPPGDLVAVPENATIRELKSAAEKVLRDTYCITETFEVLEIRNRYLEKLDDNVSLKSQGNTEFMVKGFGLDIGTELRYEGGFDDWTVDCKCGARDDDGERMVACDACKVWHHTLCNSIEDDEAVPSVFLCNMCYGDSLRSKKRNLSIR.

Disordered regions lie at residues 319–362 (DENS…QYYS) and 457–478 (EQKR…TSTT). Residues 339-349 (SGRDTVLDDHN) show a composition bias toward basic and acidic residues. Residues 635–685 (TVDCKCGARDDDGERMVACDACKVWHHTLCNSIEDDEAVPSVFLCNMCYGD) form a PHD-type zinc finger.

It is found in the nucleus. The protein is PHD finger protein At2g01810 of Arabidopsis thaliana (Mouse-ear cress).